Reading from the N-terminus, the 592-residue chain is BRCA1-associated protein (592 aa).

At Ser52 the chain carries Phosphoserine. Positions 78-124 (KSNPDELKTTVEERKSSEASPTAQRSKDHSKECINAAPDSPSKQLPD) are disordered. Positions 80–94 (NPDELKTTVEERKSS) are enriched in basic and acidic residues. Phosphoserine occurs at positions 97, 117, and 119. An RING-type zinc finger spans residues 264–304 (CTVCLERMDESVNGILTTLCNHSFHSQCLQRWDDTTCPVCR). Residues 301-393 (PVCRYCQTPE…GKIVQYECEG (93 aa)) form a UBP-type; degenerate zinc finger. Zn(2+) contacts are provided by Cys317, Cys320, Cys329, Cys332, Cys337, His344, His348, and His354. Residues 429–537 (RIEKDTAEEI…EIQEQLRDVM (109 aa)) adopt a coiled-coil conformation. The disordered stretch occupies residues 565–592 (AMASASSPASSGGSGKLPSRKGRSKRGK). Residues 582–592 (PSRKGRSKRGK) show a composition bias toward basic residues.

In terms of assembly, interacts with the nuclear localization signal of BRCA1 and with the N-terminal of KSR1. The C-terminal portion of BCRA1 interacts with DDB1. As to expression, expressed in breast epithelial cell lines.

The protein localises to the cytoplasm. The catalysed reaction is S-ubiquitinyl-[E2 ubiquitin-conjugating enzyme]-L-cysteine + [acceptor protein]-L-lysine = [E2 ubiquitin-conjugating enzyme]-L-cysteine + N(6)-ubiquitinyl-[acceptor protein]-L-lysine.. The protein operates within protein modification; protein ubiquitination. Negatively regulates MAP kinase activation by limiting the formation of Raf/MEK complexes probably by inactivation of the KSR1 scaffold protein. Also acts as a Ras responsive E3 ubiquitin ligase that, on activation of Ras, is modified by auto-polyubiquitination resulting in the release of inhibition of Raf/MEK complex formation. May also act as a cytoplasmic retention protein with a role in regulating nuclear transport. The protein is BRCA1-associated protein of Homo sapiens (Human).